The primary structure comprises 616 residues: ATP-dependent RNA helicase dbp9 (616 aa).

A disordered region spans residues 1 to 29 (MKRKLDANDVPSPEVAETKETSDADEADF). Residues 27-55 (ADFESLNLDPRLRQALIKEKFTKPTPVQA) carry the Q motif motif. The Helicase ATP-binding domain maps to 58-236 (IPLALAGKDI…GLFCRSPVVL (179 aa)). 71-78 (AKTGSGKT) lines the ATP pocket. A DEAD box motif is present at residues 184 to 187 (DEAD). Residues 247–481 (GVSQFVVKCA…EVKPYHFEMS (235 aa)) enclose the Helicase C-terminal domain. 2 disordered regions span residues 340 to 385 (KSKK…LTAK) and 579 to 616 (SDNR…RGRK). Positions 584–601 (RKARDKNRAKGKGRKPSG) are enriched in basic residues.

Belongs to the DEAD box helicase family. DDX56/DBP9 subfamily.

The protein localises to the nucleus. It localises to the nucleolus. The catalysed reaction is ATP + H2O = ADP + phosphate + H(+). ATP-binding RNA helicase involved in the biogenesis of 60S ribosomal subunits and is required for the normal formation of 25S and 5.8S rRNAs. This Aspergillus niger (strain ATCC MYA-4892 / CBS 513.88 / FGSC A1513) protein is ATP-dependent RNA helicase dbp9 (dbp9).